Reading from the N-terminus, the 967-residue chain is Regulator of G-protein signaling 3 (967 aa).

The PDZ domain occupies 18–95 (QITIRRGKDG…EIILLVWRVV (78 aa)). The disordered stretch occupies residues 115 to 135 (THDLLSPPNKREKNCTHGAPT). Arg-167 is subject to Omega-N-methylarginine. The interval 389-705 (QLAATPTERK…EGGLSLRVQN (317 aa)) is disordered. Polar residues-rich tracts occupy residues 476 to 486 (LPSSKNPSPSQ), 512 to 549 (SPSSEDIATCQNPPQSPETSTSKDSPPGQGSSPTTEVP), and 577 to 597 (SSASDQNVLPSQESPPSQGSL). Positions 650-676 (GEDEDAEEGEEGEEGEEDEEDDTNDDN) are enriched in acidic residues. Positions 677-687 (YGDRNEAKRSS) are enriched in basic and acidic residues. Phosphoserine occurs at positions 713, 716, 748, and 777. The tract at residues 807 to 830 (FRRRNESPGAQPAGKADKTTKSFK) is disordered. Positions 821–830 (KADKTTKSFK) are enriched in basic and acidic residues. The region spanning 842 to 967 (SLEKLLLHKY…INQKKMSPPL (126 aa)) is the RGS domain.

As to quaternary structure, binds EFNB1 and EFNB2. Binds the GNB1-GNG2 heterodimer. Binds ESR1. Post-translationally, phosphorylated by cyclic GMP-dependent protein kinase. In terms of processing, ISGylated. Detected in kidney, uterus, ovary, heart, brain, spleen, lung and testis.

The protein localises to the cytoplasm. Its subcellular location is the membrane. It is found in the nucleus. Down-regulates signaling from heterotrimeric G-proteins by increasing the GTPase activity of the alpha subunits, thereby driving them into their inactive GDP-bound form. Down-regulates G-protein-mediated release of inositol phosphates and activation of MAP kinases. The protein is Regulator of G-protein signaling 3 (Rgs3) of Rattus norvegicus (Rat).